The sequence spans 236 residues: 1-(5-phosphoribosyl)-5-[(5-phosphoribosylamino)methylideneamino] imidazole-4-carboxamide isomerase (236 aa).

D8 functions as the Proton acceptor in the catalytic mechanism. The Proton donor role is filled by D129.

This sequence belongs to the HisA/HisF family.

Its subcellular location is the cytoplasm. The enzyme catalyses 1-(5-phospho-beta-D-ribosyl)-5-[(5-phospho-beta-D-ribosylamino)methylideneamino]imidazole-4-carboxamide = 5-[(5-phospho-1-deoxy-D-ribulos-1-ylimino)methylamino]-1-(5-phospho-beta-D-ribosyl)imidazole-4-carboxamide. It functions in the pathway amino-acid biosynthesis; L-histidine biosynthesis; L-histidine from 5-phospho-alpha-D-ribose 1-diphosphate: step 4/9. The sequence is that of 1-(5-phosphoribosyl)-5-[(5-phosphoribosylamino)methylideneamino] imidazole-4-carboxamide isomerase from Methanosphaerula palustris (strain ATCC BAA-1556 / DSM 19958 / E1-9c).